A 393-amino-acid polypeptide reads, in one-letter code: Acetate kinase (393 aa).

Position 7 (N7) interacts with Mg(2+). ATP is bound at residue K14. R87 is a substrate binding site. D144 (proton donor/acceptor) is an active-site residue. Residues 202 to 206, 277 to 279, and 326 to 330 each bind ATP; these read HIGNG, DLR, and GVGEN. A Mg(2+)-binding site is contributed by E380.

The protein belongs to the acetokinase family. Homodimer. It depends on Mg(2+) as a cofactor. Mn(2+) serves as cofactor.

It localises to the cytoplasm. The catalysed reaction is acetate + ATP = acetyl phosphate + ADP. Its pathway is metabolic intermediate biosynthesis; acetyl-CoA biosynthesis; acetyl-CoA from acetate: step 1/2. Functionally, catalyzes the formation of acetyl phosphate from acetate and ATP. Can also catalyze the reverse reaction. This is Acetate kinase from Mycoplasmopsis pulmonis (strain UAB CTIP) (Mycoplasma pulmonis).